The chain runs to 93 residues: Beta-defensin 128 (93 aa).

Positions 1–18 (MKLFLVLIILLFEVLTDG) are cleaved as a signal peptide. 3 cysteine pairs are disulfide-bonded: C24–C52, C32–C46, and C36–C53.

Belongs to the beta-defensin family.

It localises to the secreted. Its function is as follows. Has antibacterial activity. This is Beta-defensin 128 (DEFB128) from Homo sapiens (Human).